The sequence spans 435 residues: Transcriptional enhancer factor TEF-5 (435 aa).

Residues 1–12 (MASNSWNASSSP) are compositionally biased toward polar residues. The disordered stretch occupies residues 1 to 34 (MASNSWNASSSPGEAREDGPEGLDKGLDNDAEGV). N-acetylalanine is present on alanine 2. Over residues 14-28 (EAREDGPEGLDKGLD) the composition is skewed to basic and acidic residues. A DNA-binding region (TEA) is located at residues 28-104 (DNDAEGVWSP…QVLARKKVRE (77 aa)). Serine 148 carries the phosphoserine modification. Residues 173–435 (GPSQDIKPFA…QHHVYKLVKD (263 aa)) form a transcriptional activation region.

In terms of assembly, interacts with YAP1 and WWTR1/TAZ. In terms of tissue distribution, preferentially expressed in the placenta.

It is found in the nucleus. Functionally, transcription factor which plays a key role in the Hippo signaling pathway, a pathway involved in organ size control and tumor suppression by restricting proliferation and promoting apoptosis. The core of this pathway is composed of a kinase cascade wherein MST1/MST2, in complex with its regulatory protein SAV1, phosphorylates and activates LATS1/2 in complex with its regulatory protein MOB1, which in turn phosphorylates and inactivates YAP1 oncoprotein and WWTR1/TAZ. Acts by mediating gene expression of YAP1 and WWTR1/TAZ, thereby regulating cell proliferation, migration and epithelial mesenchymal transition (EMT) induction. Binds to multiple functional elements of the human chorionic somatomammotropin-B gene enhancer. The sequence is that of Transcriptional enhancer factor TEF-5 (TEAD3) from Homo sapiens (Human).